The chain runs to 145 residues: Globin-1 (145 aa).

The Globin domain maps to G1–Y145. Residues H63 and H92 each contribute to the heme b site.

The protein belongs to the globin family. As to quaternary structure, monomer.

The protein is Globin-1 of Liolophura japonica (Chiton).